We begin with the raw amino-acid sequence, 631 residues long: 1-deoxy-D-xylulose-5-phosphate synthase (631 aa).

Thiamine diphosphate-binding positions include histidine 72 and 113–115 (GHA). A Mg(2+)-binding site is contributed by aspartate 144. Thiamine diphosphate contacts are provided by residues 145–146 (GA), asparagine 174, tyrosine 287, and glutamate 370. Asparagine 174 is a binding site for Mg(2+).

This sequence belongs to the transketolase family. DXPS subfamily. Homodimer. Mg(2+) is required as a cofactor. Requires thiamine diphosphate as cofactor.

It carries out the reaction D-glyceraldehyde 3-phosphate + pyruvate + H(+) = 1-deoxy-D-xylulose 5-phosphate + CO2. It functions in the pathway metabolic intermediate biosynthesis; 1-deoxy-D-xylulose 5-phosphate biosynthesis; 1-deoxy-D-xylulose 5-phosphate from D-glyceraldehyde 3-phosphate and pyruvate: step 1/1. Its function is as follows. Catalyzes the acyloin condensation reaction between C atoms 2 and 3 of pyruvate and glyceraldehyde 3-phosphate to yield 1-deoxy-D-xylulose-5-phosphate (DXP). This is 1-deoxy-D-xylulose-5-phosphate synthase from Prochlorococcus marinus (strain MIT 9515).